The sequence spans 287 residues: Ethylene-responsive transcription factor ERF116 (287 aa).

The segment at residues 80–140 (YPVGVRPRPS…ASSGSAVSSS (61 aa)) is a DNA-binding region (AP2/ERF).

Belongs to the AP2/ERF transcription factor family. ERF subfamily.

It localises to the nucleus. In terms of biological role, probably acts as a transcriptional activator. Binds to the GCC-box pathogenesis-related promoter element. May be involved in the regulation of gene expression by stress factors and by components of stress signal transduction pathways. This is Ethylene-responsive transcription factor ERF116 (ERF116) from Arabidopsis thaliana (Mouse-ear cress).